The chain runs to 159 residues: 6,7-dimethyl-8-ribityllumazine synthase (159 aa).

Residues Phe22, 57 to 59 (AVE), and 81 to 83 (AVI) each bind 5-amino-6-(D-ribitylamino)uracil. 86–87 (GT) contributes to the (2S)-2-hydroxy-3-oxobutyl phosphate binding site. The active-site Proton donor is the His89. Phe114 contacts 5-amino-6-(D-ribitylamino)uracil. A (2S)-2-hydroxy-3-oxobutyl phosphate-binding site is contributed by Arg128.

This sequence belongs to the DMRL synthase family. Forms an icosahedral capsid composed of 60 subunits, arranged as a dodecamer of pentamers.

It catalyses the reaction (2S)-2-hydroxy-3-oxobutyl phosphate + 5-amino-6-(D-ribitylamino)uracil = 6,7-dimethyl-8-(1-D-ribityl)lumazine + phosphate + 2 H2O + H(+). Its pathway is cofactor biosynthesis; riboflavin biosynthesis; riboflavin from 2-hydroxy-3-oxobutyl phosphate and 5-amino-6-(D-ribitylamino)uracil: step 1/2. Functionally, catalyzes the formation of 6,7-dimethyl-8-ribityllumazine by condensation of 5-amino-6-(D-ribitylamino)uracil with 3,4-dihydroxy-2-butanone 4-phosphate. This is the penultimate step in the biosynthesis of riboflavin. This is 6,7-dimethyl-8-ribityllumazine synthase from Shewanella denitrificans (strain OS217 / ATCC BAA-1090 / DSM 15013).